Reading from the N-terminus, the 104-residue chain is Guanidinium exporter (104 aa).

Residue methionine 1 is a topological domain, cytoplasmic. Residues 2–19 form a helical membrane-spanning segment; the sequence is AWIILVIAGLLEVIWAIG. The Periplasmic portion of the chain corresponds to 20-28; sequence LKYSHGFSR. The chain crosses the membrane as a helical span at residues 29-48; sequence LTPSIITLVAMAASVFLLAY. The Cytoplasmic segment spans residues 49–54; that stretch reads AMKSLP. Residues 55–77 traverse the membrane as a helical segment; sequence AGTAYAVWTGIGAVGTAILGIVL. Topologically, residues 78–81 are periplasmic; the sequence is LGES. A helical membrane pass occupies residues 82-100; it reads ASLARILSLGLILAGIIGL. The Cytoplasmic segment spans residues 101–104; that stretch reads KLAS.

It belongs to the drug/metabolite transporter (DMT) superfamily. Small multidrug resistance (SMR) (TC 2.A.7.1) family. Gdx/SugE subfamily.

It is found in the cell inner membrane. Functionally, guanidinium ion exporter. Couples guanidinium export to the proton motive force, exchanging one guanidinium ion for two protons. This is Guanidinium exporter from Yersinia pestis.